Here is a 300-residue protein sequence, read N- to C-terminus: Lysenin-related protein 3 (300 aa).

Residues 12–35 are N-terminal cap domain; the sequence is EEIEVDVVAVWKEGYVYENRGDTS. The segment at 36–109 is beta-hairpin domain; that stretch reads VEQKITMTKG…SQVIEHTVTI (74 aa). Residues 110–158 are N-terminal cap domain; the sequence is PPTSKFTRWKLNADVGGTDIEYMYLIDEVTPISVTQTIPQVIRSRAKIL. The interval 159 to 299 is C-terminal receptor-binding domain; it reads VGRQIHLGTT…EDKWILEVVN (141 aa). 4 residues coordinate an N-(acyl)-sphingosylphosphocholine: Lys-187, Ser-229, Tyr-235, and Tyr-284. Residues Cys-274 and Cys-285 are joined by a disulfide bond.

It belongs to the lysenin family. Binds to sphingomyelin as a monomer by using its C-terminal domain. Forms a nonamer when sphingomyelin/LRP-3 ratio is lower than ca 500. Oligomerization, but not binding, is influenced by the fluidity of sphingomyelin. Expressed by coelomocytes.

It is found in the secreted. The protein localises to the target cell membrane. Its function is as follows. Pore-forming toxin that specifically binds sphingomyelin in the plasma membrane of various cells. Has antibacterial and hemolytic activity. This is Lysenin-related protein 3 from Eisenia fetida (Red wiggler worm).